The following is a 215-amino-acid chain: Virulence protein YscR (215 aa).

A run of 4 helical transmembrane segments spans residues 10-30, 53-73, 156-176, and 188-208; these read LIGI…GTSF, IALY…TLLA, IGLL…NILL, and ISLP…LTLA.

It belongs to the FliP/MopC/SpaP family.

It localises to the cell membrane. This chain is Virulence protein YscR (yscR), found in Salmonella typhimurium (strain LT2 / SGSC1412 / ATCC 700720).